A 242-amino-acid polypeptide reads, in one-letter code: Ribonuclease PH (242 aa).

Phosphate-binding positions include R86 and 124–126 (GTR).

It belongs to the RNase PH family. Homohexameric ring arranged as a trimer of dimers.

It catalyses the reaction tRNA(n+1) + phosphate = tRNA(n) + a ribonucleoside 5'-diphosphate. Phosphorolytic 3'-5' exoribonuclease that plays an important role in tRNA 3'-end maturation. Removes nucleotide residues following the 3'-CCA terminus of tRNAs; can also add nucleotides to the ends of RNA molecules by using nucleoside diphosphates as substrates, but this may not be physiologically important. Probably plays a role in initiation of 16S rRNA degradation (leading to ribosome degradation) during starvation. In Caulobacter sp. (strain K31), this protein is Ribonuclease PH.